We begin with the raw amino-acid sequence, 226 residues long: 7-cyano-7-deazaguanine synthase (226 aa).

An ATP-binding site is contributed by Leu10–Ala20. Zn(2+)-binding residues include Cys191, Cys199, Cys202, and Cys205.

The protein belongs to the QueC family. Zn(2+) is required as a cofactor.

It carries out the reaction 7-carboxy-7-deazaguanine + NH4(+) + ATP = 7-cyano-7-deazaguanine + ADP + phosphate + H2O + H(+). It participates in purine metabolism; 7-cyano-7-deazaguanine biosynthesis. Catalyzes the ATP-dependent conversion of 7-carboxy-7-deazaguanine (CDG) to 7-cyano-7-deazaguanine (preQ(0)). The chain is 7-cyano-7-deazaguanine synthase from Synechococcus sp. (strain CC9311).